Consider the following 188-residue polypeptide: Elongation factor P (188 aa).

It belongs to the elongation factor P family.

Its subcellular location is the cytoplasm. Its pathway is protein biosynthesis; polypeptide chain elongation. Its function is as follows. Involved in peptide bond synthesis. Stimulates efficient translation and peptide-bond synthesis on native or reconstituted 70S ribosomes in vitro. Probably functions indirectly by altering the affinity of the ribosome for aminoacyl-tRNA, thus increasing their reactivity as acceptors for peptidyl transferase. The polypeptide is Elongation factor P (Bradyrhizobium diazoefficiens (strain JCM 10833 / BCRC 13528 / IAM 13628 / NBRC 14792 / USDA 110)).